Here is a 760-residue protein sequence, read N- to C-terminus: Forkhead box protein M1 (760 aa).

Disordered regions lie at residues 1–54 and 95–167; these read MRTS…AESS and GKES…SYAG. Low complexity-rich tracts occupy residues 43–54 and 110–124; these read PAQASQEVAESS and SSGGPSSHPSQPQAH. A compositionally biased stretch (basic and acidic residues) spans 125 to 134; the sequence is SSRDSKRAEV. Low complexity predominate over residues 140-149; that stretch reads GPKPAAKGVP. Glycyl lysine isopeptide (Lys-Gly) (interchain with G-Cter in SUMO2) cross-links involve residues Lys-199 and Lys-323. The segment at residues 233–325 is a DNA-binding region (fork-head); the sequence is ERPPYSYMAM…LTLDQVFKPL (93 aa). The tract at residues 323 to 348 is disordered; sequence KPLEPGSPQSPEHLESQQKRPNPELH. Position 329 is a phosphoserine (Ser-329). Residues 334–348 are compositionally biased toward basic and acidic residues; that stretch reads EHLESQQKRPNPELH. Residue Lys-354 forms a Glycyl lysine isopeptide (Lys-Gly) (interchain with G-Cter in SUMO2) linkage. Ser-374 carries the post-translational modification Phosphoserine; by CHEK2. Residues Lys-420 and Lys-438 each participate in a glycyl lysine isopeptide (Lys-Gly) (interchain with G-Cter in SUMO2) cross-link. Disordered regions lie at residues 500–560, 577–635, and 660–709; these read SWED…PDLF, ESSE…LDFS, and PLKS…IPSL. Residue Ser-521 is modified to Phosphoserine. Over residues 531–542 the composition is skewed to basic and acidic residues; the sequence is VTKRREKREVSR. Residues 604 to 613 show a composition bias toward polar residues; it reads PVSSTPSKSV. Thr-608 carries the phosphothreonine; by CDK1 modification. Residue Thr-624 is modified to Phosphothreonine. Ser-727 and Ser-736 each carry phosphoserine; by PLK1.

Post-translationally, phosphorylated in M (mitotic) phase. Phosphorylation by the checkpoint kinase CHEK2 in response to DNA damage increases the FOXM1 protein stability probably stimulating the transcription of genes involved in DNA repair. Phosphorylated by CDK1 in late S and G2 phases, creating docking sites for the POLO box domains of PLK1. Subsequently, PLK1 binds and phosphorylates FOXM1, leading to activation of transcriptional activity and subsequent enhanced expression of key mitotic regulators. Phosphorylated by GSK3B leading to ubiquitination and proteasomal degradation. Expressed in fetal heart, brain, liver, lung, kidney and limb, but only in adult thymus. Appears to be expressed only in adult organs containing proliferating/cycling cells or in response to growth factors.

The protein resides in the nucleus. Its function is as follows. Transcription factor regulating the expression of cell cycle genes essential for DNA replication and mitosis. Plays a role in the control of cell proliferation. Also plays a role in DNA break repair, participating in the DNA damage checkpoint response. Promotes transcription of PHB2. This Mus musculus (Mouse) protein is Forkhead box protein M1 (Foxm1).